We begin with the raw amino-acid sequence, 464 residues long: Argininosuccinate lyase (464 aa).

The protein belongs to the lyase 1 family. Argininosuccinate lyase subfamily.

It localises to the cytoplasm. It catalyses the reaction 2-(N(omega)-L-arginino)succinate = fumarate + L-arginine. It participates in amino-acid biosynthesis; L-arginine biosynthesis; L-arginine from L-ornithine and carbamoyl phosphate: step 3/3. This Pseudomonas fluorescens (strain ATCC BAA-477 / NRRL B-23932 / Pf-5) protein is Argininosuccinate lyase.